Consider the following 371-residue polypeptide: Phospho-N-acetylmuramoyl-pentapeptide-transferase (371 aa).

The next 11 membrane-spanning stretches (helical) occupy residues 21-41 (NHIL…DFYY), 46-66 (LTIP…IGIP), 92-112 (PTMG…ILYF), 119-139 (IILT…IDDF), 156-176 (ILLQ…NNLI), 182-202 (IANK…FVLL), 216-236 (GLLS…ILIE), 241-261 (NSTL…FLFL), 268-288 (LFMG…IALI), 296-316 (LIMG…VSIF), and 349-369 (IVSS…IFLI).

The protein belongs to the glycosyltransferase 4 family. MraY subfamily. Mg(2+) is required as a cofactor.

Its subcellular location is the cell inner membrane. It carries out the reaction UDP-N-acetyl-alpha-D-muramoyl-L-alanyl-gamma-D-glutamyl-meso-2,6-diaminopimeloyl-D-alanyl-D-alanine + di-trans,octa-cis-undecaprenyl phosphate = di-trans,octa-cis-undecaprenyl diphospho-N-acetyl-alpha-D-muramoyl-L-alanyl-D-glutamyl-meso-2,6-diaminopimeloyl-D-alanyl-D-alanine + UMP. It functions in the pathway cell wall biogenesis; peptidoglycan biosynthesis. In terms of biological role, catalyzes the initial step of the lipid cycle reactions in the biosynthesis of the cell wall peptidoglycan: transfers peptidoglycan precursor phospho-MurNAc-pentapeptide from UDP-MurNAc-pentapeptide onto the lipid carrier undecaprenyl phosphate, yielding undecaprenyl-pyrophosphoryl-MurNAc-pentapeptide, known as lipid I. The polypeptide is Phospho-N-acetylmuramoyl-pentapeptide-transferase (Prochlorococcus marinus (strain NATL2A)).